A 63-amino-acid chain; its full sequence is Small ribosomal subunit protein bS21 (63 aa).

Belongs to the bacterial ribosomal protein bS21 family.

The polypeptide is Small ribosomal subunit protein bS21 (Porphyromonas gingivalis (strain ATCC 33277 / DSM 20709 / CIP 103683 / JCM 12257 / NCTC 11834 / 2561)).